The primary structure comprises 837 residues: MAEPSQAPTPAPAAQPRPLQSPAPAPTPTPAPSPASAPIPTPTPAPAPAPAAAPAGSTGTGGPGVGSGGAGSGGDPARPGLSQQQRASQRKAQVRGLPRAKKLEKLGVFSACKANETCKCNGWKNPKPPTAPRMDLQQPAANLSELCRSCEHPLADHVSHLENVSEDEINRLLGMVVDVENLFMSVHKEEDTDTKQVYFYLFKLLRKCILQMTRPVVEGSLGSPPFEKPNIEQGVLNFVQYKFSHLAPRERQTMFELSKMFLLCLNYWKLETPAQFRQRSQAEDVATYKVNYTRWLCYCHVPQSCDSLPRYETTHVFGRSLLRSIFTVTRRQLLEKFRVEKDKLVPEKRTLILTHFPKFLSMLEEEIYGANSPIWESGFTMPPSEGTQLVPRPASVSAAVVPSTPIFSPSMGGGSNSSLSLDSAGAEPMPGEKRTLPENLTLEDAKRLRVMGDIPMELVNEVMLTITDPAAMLGPETSLLSANAARDETARLEERRGIIEFHVIGNSLTPKANRRVLLWLVGLQNVFSHQLPRMPKEYIARLVFDPKHKTLALIKDGRVIGGICFRMFPTQGFTEIVFCAVTSNEQVKGYGTHLMNHLKEYHIKHNILYFLTYADEYAIGYFKKQGFSKDIKVPKSRYLGYIKDYEGATLMECELNPRIPYTELSHIIKKQKEIIKKLIERKQAQIRKVYPGLSCFKEGVRQIPVESVPGIRETGWKPLGKEKGKELKDPDQLYTTLKNLLAQIKSHPSAWPFMEPVKKSEAPDYYEVIRFPIDLKTMTERLRSRYYVTRKLFVADLQRVIANCREYNPPDSEYCRCASALEKFFYFKLKEGGLIDK.

Residues 1–99 (MAEPSQAPTP…RKAQVRGLPR (99 aa)) form a disordered region. Residue A2 is modified to N-acetylalanine. Positions 7-51 (APTPAPAAQPRPLQSPAPAPTPTPAPSPASAPIPTPTPAPAPAPA) are enriched in pro residues. The span at 58–74 (TGTGGPGVGSGGAGSGG) shows a compositional bias: gly residues. Positions 75–87 (DPARPGLSQQQRA) are enriched in low complexity. Over residues 88–99 (SQRKAQVRGLPR) the composition is skewed to basic residues. The residue at position 307 (S307) is a Phosphoserine. The tract at residues 407–434 (FSPSMGGGSNSSLSLDSAGAEPMPGEKR) is disordered. Low complexity predominate over residues 416 to 425 (NSSLSLDSAG). The N-acetyltransferase domain occupies 503-656 (VIGNSLTPKA…GATLMECELN (154 aa)). K549 is modified (N6-acetyllysine). Residue E575 is the Proton donor/acceptor of the active site. Residues 579–581 (CAV), 586–592 (QVKGYGT), and Y617 contribute to the acetyl-CoA site. Succinyl-CoA-binding positions include 579–581 (CAV), 586–592 (QVKGYGT), and Y617. Residues 639–648 (LGYIKDYEGA) form a loop 3 region. K728 participates in a covalent cross-link: Glycyl lysine isopeptide (Lys-Gly) (interchain with G-Cter in SUMO2). The Bromo domain maps to 728-832 (KDPDQLYTTL…KFFYFKLKEG (105 aa)). T735 is subject to Phosphothreonine. Glycyl lysine isopeptide (Lys-Gly) (interchain with G-Cter in SUMO2) cross-links involve residues K759 and K791.

Belongs to the acetyltransferase family. GCN5 subfamily. Homooligomer; may form a tetramer of homodimers. Interacts with EP300, CREBBP and ADA2. Component of the TFTC-HAT complex, at least composed of TAF5L, TAF6L, TAF3, TADA3L, SUPT3H/SPT3, TAF2/TAFII150, TAF4/TAFII135, TAF5/TAFII100, KAT2A/GCN5L2, TAF10 and TRRAP. Component of the STAGA transcription coactivator-HAT complex, at least composed of SUPT3H, KAT2A, SUPT7L, TAF5L, TAF6L, TADA3L, TAD1L, TAF10, TAF12, TRRAP and TAF9. The STAGA core complex is associated with a subcomplex required for histone deubiquitination composed of ATXN7L3, ENY2 and USP22. Component of the ADA2A-containing complex (ATAC), composed of KAT14, KAT2A, TADA2L, TADA3L, ZZ3, MBIP, WDR5, YEATS2, CCDC101 and DR1. In the complex, it probably interacts directly with KAT14, MBIP and WDR5. Interacts with PML. Interacts with CEBPB. Interacts with TACC1, TACC2 and TACC3. Interacts with RELA. Interacts with NFATC2. Interacts with TBX5. Interacts with PLK4. Associates with the 2-oxoglutarate dehydrogenase complex. Interacts with XPC; leading to KAT2A recruitment to promoters and subsequent acetylation of histones. Interacts with ERCC3/XPB; leading to KAT2A recruitment to promoters and subsequent acetylation of histones. Interacts with ISL1. Interactions of ISL1 with MLIP1 or KAT2A may be mutually exclusive. As to quaternary structure, (Microbial infection) Interacts with and acetylates HIV-1 Tat. In terms of processing, acetylated at Lys-549, inhibiting the protein acetyltransferase activity. Deacetylation at Lys-549 by SIRT6 promotes phosphorylation at Ser-307 and Thr-735 and subsequent activation of the protein acetyltransferase activity, leading to acetylation and inactivation of PPARGC1A. Expressed in all tissues tested.

Its subcellular location is the nucleus. It is found in the chromosome. It localises to the cytoplasm. The protein localises to the cytoskeleton. The protein resides in the microtubule organizing center. Its subcellular location is the centrosome. The catalysed reaction is L-lysyl-[histone] + acetyl-CoA = N(6)-acetyl-L-lysyl-[histone] + CoA + H(+). It carries out the reaction L-lysyl-[protein] + acetyl-CoA = N(6)-acetyl-L-lysyl-[protein] + CoA + H(+). The enzyme catalyses succinyl-CoA + L-lysyl-[protein] = N(6)-succinyl-L-lysyl-[protein] + CoA + H(+). It catalyses the reaction glutaryl-CoA + L-lysyl-[protein] = N(6)-glutaryl-L-lysyl-[protein] + CoA + H(+). Functionally, protein lysine acyltransferase that can act as a acetyltransferase, glutaryltransferase, succinyltransferase or malonyltransferase, depending on the context. Acts as a histone lysine succinyltransferase: catalyzes succinylation of histone H3 on 'Lys-79' (H3K79succ), with a maximum frequency around the transcription start sites of genes. Succinylation of histones gives a specific tag for epigenetic transcription activation. Association with the 2-oxoglutarate dehydrogenase complex, which provides succinyl-CoA, is required for histone succinylation. In different complexes, functions either as an acetyltransferase (HAT) or as a succinyltransferase: in the SAGA and ATAC complexes, acts as a histone acetyltransferase. Has significant histone acetyltransferase activity with core histones, but not with nucleosome core particles. Has a a strong preference for acetylation of H3 at 'Lys-9' (H3K9ac). Acetylation of histones gives a specific tag for epigenetic transcription activation. Recruited by the XPC complex at promoters, where it specifically mediates acetylation of histone variant H2A.Z.1/H2A.Z, thereby promoting expression of target genes. Involved in long-term memory consolidation and synaptic plasticity: acts by promoting expression of a hippocampal gene expression network linked to neuroactive receptor signaling. Acts as a positive regulator of T-cell activation: upon TCR stimulation, recruited to the IL2 promoter following interaction with NFATC2 and catalyzes acetylation of histone H3 at 'Lys-9' (H3K9ac), leading to promote IL2 expression. Required for growth and differentiation of craniofacial cartilage and bone by regulating acetylation of histone H3 at 'Lys-9' (H3K9ac). Regulates embryonic stem cell (ESC) pluripotency and differentiation. Also acetylates non-histone proteins, such as CEBPB, MRE11, PPARGC1A, PLK4 and TBX5. Involved in heart and limb development by mediating acetylation of TBX5, acetylation regulating nucleocytoplasmic shuttling of TBX5. Acts as a negative regulator of centrosome amplification by mediating acetylation of PLK4. Acts as a negative regulator of gluconeogenesis by mediating acetylation and subsequent inactivation of PPARGC1A. Also acts as a histone glutaryltransferase: catalyzes glutarylation of histone H4 on 'Lys-91' (H4K91glu), a mark that destabilizes nucleosomes by promoting dissociation of the H2A-H2B dimers from nucleosomes. In terms of biological role, (Microbial infection) In case of HIV-1 infection, it is recruited by the viral protein Tat. Regulates Tat's transactivating activity and may help inducing chromatin remodeling of proviral genes. The polypeptide is Histone acetyltransferase KAT2A (Homo sapiens (Human)).